We begin with the raw amino-acid sequence, 133 residues long: Large ribosomal subunit protein bL19 (133 aa).

Belongs to the bacterial ribosomal protein bL19 family.

In terms of biological role, this protein is located at the 30S-50S ribosomal subunit interface and may play a role in the structure and function of the aminoacyl-tRNA binding site. The sequence is that of Large ribosomal subunit protein bL19 from Stenotrophomonas maltophilia (strain R551-3).